The primary structure comprises 486 residues: Scarecrow-like protein 15 (486 aa).

Residues 1–28 (MKIPASSPQDTTNNNNNTNSTDSNHLSM) are disordered. Residues 10 to 24 (DTTNNNNNTNSTDSN) show a composition bias toward low complexity. The region spanning 113–485 (DSVDNGGFDF…RALVATSAWR (373 aa)) is the GRAS domain. Positions 120-179 (FDFIEDLIRVVDCVESDELQLAQVVLSRLNQRLRSPAGRPLQRAAFYFKEALGSFLTGSN) are leucine repeat I (LRI). Residues 198–266 (IKEYSGISPI…VSGGFLRVTA (69 aa)) are VHIID. A VHIID motif is present at residues 232 to 236 (VHVVD). A leucine repeat II (LRII) region spans residues 278–310 (LVKENLTQFAAEMKIRFQIEFVLMKTFEMLSFK). Residues 320–410 (TVVLISPAIF…AFVLRPKISA (91 aa)) form a PFYRE region. The segment at 413-485 (ETAADRRHTG…RALVATSAWR (73 aa)) is SAW.

Belongs to the GRAS family. Expressed in seedlings, roots, leaves and flowers.

The protein resides in the nucleus. In terms of biological role, probable transcription factor involved in plant development. The sequence is that of Scarecrow-like protein 15 (SCL15) from Arabidopsis thaliana (Mouse-ear cress).